We begin with the raw amino-acid sequence, 662 residues long: Probable quinol oxidase subunit 1 (662 aa).

2 helical membrane passes run 14-34 (WMIT…IAVI) and 58-78 (IMYL…ALLI). A Fe(II)-heme a-binding site is contributed by H102. A run of 8 helical transmembrane segments spans residues 103 to 123 (GVIM…NIVV), 140 to 160 (VSFW…IIGG), 187 to 207 (IAIQ…FVTI), 228 to 248 (FITT…LALM), 273 to 293 (FFWV…FGIY), 311 to 331 (MVWA…HHFF), 336 to 356 (GALI…PTGV), and 376 to 396 (MLFS…GVML). 4 residues coordinate Cu cation: H279, Y283, H328, and H329. Positions 279–283 (HPEVY) form a cross-link, 1'-histidyl-3'-tyrosine (His-Tyr). Residue H414 coordinates heme a3. 5 helical membrane-spanning segments follow: residues 415 to 435 (FHYT…IFWY), 451 to 471 (CFWF…ILGL), 493 to 513 (ISTI…VSIV), 587 to 604 (PVGF…FFLI), and 608 to 627 (VIPA…YRSF). H416 contacts Fe(II)-heme a.

This sequence belongs to the heme-copper respiratory oxidase family. Cu cation serves as cofactor. The cofactor is ferriheme a. Heme A3. is required as a cofactor.

It is found in the cell membrane. The catalysed reaction is 2 a quinol + O2 = 2 a quinone + 2 H2O. It participates in energy metabolism; oxidative phosphorylation. In terms of biological role, catalyzes quinol oxidation with the concomitant reduction of oxygen to water. This chain is Probable quinol oxidase subunit 1 (qoxB), found in Staphylococcus aureus (strain USA300).